Here is a 200-residue protein sequence, read N- to C-terminus: Ribosomal RNA large subunit methyltransferase E (200 aa).

S-adenosyl-L-methionine-binding residues include Gly51, Trp53, Asp71, Asp90, and Asp112. Lys151 serves as the catalytic Proton acceptor.

This sequence belongs to the class I-like SAM-binding methyltransferase superfamily. RNA methyltransferase RlmE family.

It localises to the cytoplasm. It catalyses the reaction uridine(2552) in 23S rRNA + S-adenosyl-L-methionine = 2'-O-methyluridine(2552) in 23S rRNA + S-adenosyl-L-homocysteine + H(+). Functionally, specifically methylates the uridine in position 2552 of 23S rRNA at the 2'-O position of the ribose in the fully assembled 50S ribosomal subunit. The chain is Ribosomal RNA large subunit methyltransferase E from Treponema pallidum (strain Nichols).